The sequence spans 98 residues: Conotoxin Di19A (98 aa).

The signal sequence occupies residues 1–19 (MSTLGILLPIALLLPLANP). Positions 20-49 (AENGDGQAMPRTRNLRSLSFGRTLRRLEKR) are excised as a propeptide. At Pro53 the chain carries 4-hydroxyproline. At Glu63 the chain carries 4-carboxyglutamate. Residues Pro68, Pro93, and Pro97 each carry the 4-hydroxyproline modification.

In terms of processing, contains 5 disulfide bonds. As to expression, expressed by the venom duct.

It localises to the secreted. Functionally, injection of the synthetic peptide causes a hyperexcitable phenotype in mice greater than three weeks of age at lower doses, and lethargy at higher doses. The protein is Conotoxin Di19A of Conus distans (Distant cone).